The sequence spans 145 residues: 3-dehydroquinate dehydratase (145 aa).

The Proton acceptor role is filled by Tyr-22. Substrate is bound by residues Asn-74, His-80, and Asp-87. His-100 functions as the Proton donor in the catalytic mechanism. Substrate contacts are provided by residues 101 to 102 and Arg-111; that span reads IS.

It belongs to the type-II 3-dehydroquinase family. Homododecamer.

The enzyme catalyses 3-dehydroquinate = 3-dehydroshikimate + H2O. It functions in the pathway metabolic intermediate biosynthesis; chorismate biosynthesis; chorismate from D-erythrose 4-phosphate and phosphoenolpyruvate: step 3/7. Catalyzes a trans-dehydration via an enolate intermediate. In Lachnoclostridium phytofermentans (strain ATCC 700394 / DSM 18823 / ISDg) (Clostridium phytofermentans), this protein is 3-dehydroquinate dehydratase.